The chain runs to 125 residues: Small ribosomal subunit protein uS12m (125 aa).

Disordered stretches follow at residues 1–23 (MPTLNQLIRHGREEKRRTDRTRA) and 104–125 (LMGIPGRRSGRSKYGAEKPKSI). Residues 10–23 (HGREEKRRTDRTRA) are compositionally biased toward basic and acidic residues.

It belongs to the universal ribosomal protein uS12 family.

The protein resides in the mitochondrion. Functionally, protein S12 is involved in the translation initiation step. The sequence is that of Small ribosomal subunit protein uS12m (RPS12) from Raphanus sativus (Radish).